Consider the following 748-residue polypeptide: Catalase-peroxidase (748 aa).

A cross-link (tryptophyl-tyrosyl-methioninium (Trp-Tyr) (with M-255)) is located at residues 96 to 229; the sequence is WHSAGTYRVA…LAAAHMGLIY (134 aa). The active-site Proton acceptor is the His97. Residues 229 to 255 constitute a cross-link (tryptophyl-tyrosyl-methioninium (Tyr-Met) (with W-96)); sequence YVNPEGPDGNPDPIAAAKDIRTTFGRM. His270 serves as a coordination point for heme b.

The protein belongs to the peroxidase family. Peroxidase/catalase subfamily. As to quaternary structure, homodimer or homotetramer. It depends on heme b as a cofactor. In terms of processing, formation of the three residue Trp-Tyr-Met cross-link is important for the catalase, but not the peroxidase activity of the enzyme.

The protein resides in the cytoplasm. The enzyme catalyses H2O2 + AH2 = A + 2 H2O. The catalysed reaction is 2 H2O2 = O2 + 2 H2O. In terms of biological role, bifunctional enzyme with both catalase and broad-spectrum peroxidase activity. Plays a crucial role in oxidative stress response during infection. Acts as an antigen and elicits antibody response in P.marneffei-infected AIDS patients, healthy people working in mycological laboratory, and healthy people in an endemic area. In Talaromyces marneffei (Penicillium marneffei), this protein is Catalase-peroxidase.